Here is a 310-residue protein sequence, read N- to C-terminus: MLDANKLQQAVDQAYTQFHSLNGGQNADYIPFLANVPGQLAAVAIVTSDGNVYSAGDSDYRFALESISKVCTLALALEDVGPQAVQDKVGADPTGLPFNSVIALELHGGKPLSPLVNAGAIATTSLINAENTEQRWQRILHIQQQLAGEQVALSDEVNQSEQTTNFHNRAIAWLLYSAGYLYCDAMEACDVYTRQCSTLINTIELATLGATLAAGGVNPLTHKRVLQANNVPYILAEMMMEGLYGRSGDWAYRVGLPGKSGVGGGILAVVPGVMGIAAFSPPLDEEGNSVRGQKMVASVAKQLGYNVFKG.

Substrate contacts are provided by Ser-66, Asn-117, Glu-161, Asn-168, Tyr-192, Tyr-244, and Val-262. An N6-acetyllysine modification is found at Lys-294.

This sequence belongs to the glutaminase family. As to quaternary structure, homotetramer.

It carries out the reaction L-glutamine + H2O = L-glutamate + NH4(+). The protein is Glutaminase of Escherichia coli O81 (strain ED1a).